A 165-amino-acid chain; its full sequence is Immunity protein YokJ (165 aa).

Probably interacts with cognate toxin YokI but not with other non-cognate toxins. The interaction inhibits the toxic activity of YokI.

The protein resides in the cytoplasm. Immunity component of one of 6 LXG toxin-immunity modules in this strain. They promote kin selection, mediate competition in biofilms, and drive spatial segregation of different strains, indicating that LXG toxins may help avoid warfare between strains in biofilms. Mediates intercellular competition during biofilm formation; disruption of the operon disadvantages the bacteria, but overexpression of the cognate immunity protein restores growth in competition with wild-type. In situ neutralizes the toxic effect of cognate toxin YokI. Neutralizes the ability to inhibit growth of cognate toxin YokI upon expression in E.coli. Does not have immunity protein activity on other LXG toxins. This is Immunity protein YokJ (yokJ) from Bacillus subtilis (strain 168).